A 427-amino-acid chain; its full sequence is Serine hydroxymethyltransferase (427 aa).

(6S)-5,6,7,8-tetrahydrofolate is bound by residues Leu122 and 126-128 (GHL). Lys231 is subject to N6-(pyridoxal phosphate)lysine.

This sequence belongs to the SHMT family. In terms of assembly, homodimer. Pyridoxal 5'-phosphate is required as a cofactor.

Its subcellular location is the cytoplasm. It catalyses the reaction (6R)-5,10-methylene-5,6,7,8-tetrahydrofolate + glycine + H2O = (6S)-5,6,7,8-tetrahydrofolate + L-serine. It functions in the pathway one-carbon metabolism; tetrahydrofolate interconversion. It participates in amino-acid biosynthesis; glycine biosynthesis; glycine from L-serine: step 1/1. Functionally, catalyzes the reversible interconversion of serine and glycine with tetrahydrofolate (THF) serving as the one-carbon carrier. This reaction serves as the major source of one-carbon groups required for the biosynthesis of purines, thymidylate, methionine, and other important biomolecules. Also exhibits THF-independent aldolase activity toward beta-hydroxyamino acids, producing glycine and aldehydes, via a retro-aldol mechanism. The chain is Serine hydroxymethyltransferase from Acidobacterium capsulatum (strain ATCC 51196 / DSM 11244 / BCRC 80197 / JCM 7670 / NBRC 15755 / NCIMB 13165 / 161).